The primary structure comprises 311 residues: MINPLYRKHIISINDMSSNELELVLNIAAHLKFKPQPELLKNKVIASCFFEASTRTRLSFETAIHRLGASVVGFSDAHSTSLSKKGETLADTISVISTYVDAIIIRHPHEGAARLATEFSGTVPILNAGDGANQHPTQTLLDLFNIYETQGKLNNLRIAMVGDLKYGRTVHSLTQALIKFDSNHFYFIAPDTLGMPSYILHTLIDHDIKYSMHLNLAEVIPELDILYMTRVQKERLDPTEYINVKAQFVLQIHHLLHARANMRILHPLPRVDEIAYEVDQTPYAYYFQQAGNGVFTRQALLALVLNKYLTE.

Carbamoyl phosphate-binding residues include R55 and T56. Position 85 (K85) interacts with L-aspartate. Carbamoyl phosphate contacts are provided by R106, H135, and Q138. L-aspartate-binding residues include R168 and R230. L268 and P269 together coordinate carbamoyl phosphate.

The protein belongs to the aspartate/ornithine carbamoyltransferase superfamily. ATCase family. Heterododecamer (2C3:3R2) of six catalytic PyrB chains organized as two trimers (C3), and six regulatory PyrI chains organized as three dimers (R2).

It carries out the reaction carbamoyl phosphate + L-aspartate = N-carbamoyl-L-aspartate + phosphate + H(+). The protein operates within pyrimidine metabolism; UMP biosynthesis via de novo pathway; (S)-dihydroorotate from bicarbonate: step 2/3. Catalyzes the condensation of carbamoyl phosphate and aspartate to form carbamoyl aspartate and inorganic phosphate, the committed step in the de novo pyrimidine nucleotide biosynthesis pathway. The chain is Aspartate carbamoyltransferase catalytic subunit from Baumannia cicadellinicola subsp. Homalodisca coagulata.